The sequence spans 356 residues: Tyrosine recombinase XerS (356 aa).

Positions 16–121 (IMPWYVLDYY…ALSSLYKYLT (106 aa)) constitute a Core-binding (CB) domain. Residues 169-354 (AFLDYVDKEY…VNDEQKNALD (186 aa)) form the Tyr recombinase domain. Active-site residues include Arg210, Lys234, His306, Arg309, and His332. The active-site O-(3'-phospho-DNA)-tyrosine intermediate is the Tyr341.

It belongs to the 'phage' integrase family. XerS subfamily.

The protein localises to the cytoplasm. FtsK is required for recombination. Functionally, site-specific tyrosine recombinase, which acts by catalyzing the cutting and rejoining of the recombining DNA molecules. Essential to convert dimers of the bacterial chromosome into monomers to permit their segregation at cell division. The chain is Tyrosine recombinase XerS from Streptococcus pyogenes serotype M5 (strain Manfredo).